Reading from the N-terminus, the 149-residue chain is SKP1-like protein 14 (149 aa).

The interaction with the F-box domain of F-box proteins stretch occupies residues 91 to 149 (LLAANYLNIKGLLDLSAQTVADRIKDKTPEEIREIFNIENDFTPEEEAAVRKENAWAFE).

Belongs to the SKP1 family. In terms of assembly, part of a SCF (SKP1-cullin-F-box) protein ligase complex. Interacts with CPR1/CPR30, At3g61590, At4g39550 and At5g49610. In terms of tissue distribution, restricted to inflorescences, pollen and leaves.

The protein resides in the nucleus. The protein operates within protein modification; protein ubiquitination. Involved in ubiquitination and subsequent proteasomal degradation of target proteins. Together with CUL1, RBX1 and a F-box protein, it forms a SCF E3 ubiquitin ligase complex. The functional specificity of this complex depends on the type of F-box protein. In the SCF complex, it serves as an adapter that links the F-box protein to CUL1. This is SKP1-like protein 14 (ASK14) from Arabidopsis thaliana (Mouse-ear cress).